A 301-amino-acid chain; its full sequence is ATP synthase gamma chain (301 aa).

Belongs to the ATPase gamma chain family. As to quaternary structure, F-type ATPases have 2 components, CF(1) - the catalytic core - and CF(0) - the membrane proton channel. CF(1) has five subunits: alpha(3), beta(3), gamma(1), delta(1), epsilon(1). CF(0) has three main subunits: a, b and c.

The protein resides in the cell inner membrane. In terms of biological role, produces ATP from ADP in the presence of a proton gradient across the membrane. The gamma chain is believed to be important in regulating ATPase activity and the flow of protons through the CF(0) complex. The protein is ATP synthase gamma chain of Helicobacter pylori (strain J99 / ATCC 700824) (Campylobacter pylori J99).